Reading from the N-terminus, the 62-residue chain is Short neurotoxin C (62 aa).

The span at 1-16 (RRCFNQQSSQPQTNKS) shows a compositional bias: polar residues. Residues 1 to 21 (RRCFNQQSSQPQTNKSCPPGE) are disordered. Intrachain disulfides connect Cys3–Cys24, Cys17–Cys41, Cys43–Cys54, and Cys55–Cys60.

The protein belongs to the three-finger toxin family. Short-chain subfamily. Type I alpha-neurotoxin sub-subfamily. In terms of tissue distribution, expressed by the venom gland.

It localises to the secreted. Its function is as follows. Binds to muscle nicotinic acetylcholine receptor (nAChR) and inhibit acetylcholine from binding to the receptor, thereby impairing neuromuscular transmission. The protein is Short neurotoxin C of Laticauda crockeri (Crocker's sea snake).